The chain runs to 510 residues: 2,3-bisphosphoglycerate-independent phosphoglycerate mutase (510 aa).

Mn(2+)-binding residues include Asp12 and Ser62. Ser62 serves as the catalytic Phosphoserine intermediate. Substrate contacts are provided by residues His123, 153 to 154, Arg185, Arg191, 261 to 264, and Lys336; these read RD and RPDR. Mn(2+) contacts are provided by Asp403, His407, Asp444, His445, and His462.

The protein belongs to the BPG-independent phosphoglycerate mutase family. As to quaternary structure, monomer. It depends on Mn(2+) as a cofactor.

It catalyses the reaction (2R)-2-phosphoglycerate = (2R)-3-phosphoglycerate. Its pathway is carbohydrate degradation; glycolysis; pyruvate from D-glyceraldehyde 3-phosphate: step 3/5. Its function is as follows. Essential for rapid growth and for sporulation. Catalyzes the interconversion of 2-phosphoglycerate and 3-phosphoglycerate. This is 2,3-bisphosphoglycerate-independent phosphoglycerate mutase from Priestia megaterium (strain ATCC 12872 / QMB1551) (Bacillus megaterium).